A 582-amino-acid polypeptide reads, in one-letter code: Transcription factor PCF5 (582 aa).

2 disordered regions span residues 30 to 78 (AAGK…QHDH) and 123 to 195 (SPMG…GGGG). Residues 51 to 64 (GGDGGGVGGGGSGG) show a composition bias toward gly residues. Residues 213 to 271 (RKDRHSKVCTARGPRDRRVRLSAHTAIQFYDVQDRLGYDRPSKAVDWLIKNAKDAIDKL) form the TCP domain. Disordered regions lie at residues 283 to 306 (GAGA…ENSD), 402 to 423 (MFHH…TTQQ), and 548 to 582 (RLPA…ASHH).

Forms homodimers and heterodimers with PCF2.

It localises to the nucleus. Functionally, transcription activator. Binds the promoter core sequence 5'-GGNCC-3'. The protein is Transcription factor PCF5 (PCF5) of Oryza sativa subsp. indica (Rice).